The sequence spans 1255 residues: RNA-directed RNA polymerase (1255 aa).

Positions 548–756 constitute a RdRp catalytic domain; that stretch reads LIPLGLSPYA…QQRVSCGTFV (209 aa).

Its subcellular location is the virion. The enzyme catalyses RNA(n) + a ribonucleoside 5'-triphosphate = RNA(n+1) + diphosphate. In terms of biological role, RNA-directed RNA polymerase that is involved in transcription and genome replication. Following infection, it catalyzes the synthesis of fully conservative plus strands. After core assembly, which consists in recruitment of one capped plus-strand for each genomic segments and polymerase complexes, the polymerase switches mode and catalyzes the synthesis of complementary minus-strands. This is RNA-directed RNA polymerase from Oryza latifolia (Indian wild rice).